Here is a 181-residue protein sequence, read N- to C-terminus: Transcription termination/antitermination protein NusG (181 aa).

The KOW domain maps to 130-161; the sequence is PGEMVRVNDGPFADFNGVVEEVDYEKSRLKVS.

This sequence belongs to the NusG family. In terms of assembly, monomer. Interacts with the transcription termination factor Rho and with RNA polymerase.

Its function is as follows. Participates in transcription elongation, termination and antitermination. In the absence of Rho, increases the rate of transcription elongation by the RNA polymerase (RNAP), probably by partially suppressing pausing. In the presence of Rho, modulates most Rho-dependent termination events by interacting with the RNAP to render the complex more susceptible to the termination activity of Rho. May be required to overcome a kinetic limitation of Rho to function at certain terminators. Also involved in ribosomal RNA transcriptional antitermination. This is Transcription termination/antitermination protein NusG from Salmonella typhi.